The primary structure comprises 143 residues: Large ribosomal subunit protein uL13 (143 aa).

This sequence belongs to the universal ribosomal protein uL13 family. Part of the 50S ribosomal subunit.

This protein is one of the early assembly proteins of the 50S ribosomal subunit, although it is not seen to bind rRNA by itself. It is important during the early stages of 50S assembly. The chain is Large ribosomal subunit protein uL13 from Desulfitobacterium hafniense (strain Y51).